The chain runs to 129 residues: Transcription antitermination protein NusB (129 aa).

The protein belongs to the NusB family.

Involved in transcription antitermination. Required for transcription of ribosomal RNA (rRNA) genes. Binds specifically to the boxA antiterminator sequence of the ribosomal RNA (rrn) operons. In Staphylococcus aureus (strain USA300 / TCH1516), this protein is Transcription antitermination protein NusB.